We begin with the raw amino-acid sequence, 1217 residues long: Splicing factor 3B subunit 3 (1217 aa).

Interaction with PHF5A, SF3B1 and SF3B5 stretches follow at residues 105 to 119 and 145 to 168; these read ETFG…VPGQ and NRDA…TLVY. The residue at position 156 (Ser156) is a Phosphoserine. 2 interaction with SF3B1 and SF3B5 regions span residues 193 to 231 and 786 to 804; these read DNDP…LEEH and RKFV…ETDH. Positions 1028–1049 are interaction with SF3B1; it reads TYPRWVTTASLLDYDTVAGADK. The tract at residues 1100–1123 is interaction with SF3B5; the sequence is TVLSLQKTTLIPGGSESLVYTTLS. Residue Thr1200 is modified to Phosphothreonine.

Belongs to the RSE1 family. As to quaternary structure, component of the 17S U2 SnRNP complex, a ribonucleoprotein complex that contains small nuclear RNA (snRNA) U2 and a number of specific proteins. Part of the SF3B subcomplex of the 17S U2 SnRNP complex. SF3B associates with the splicing subcomplex SF3A and a 12S RNA unit to form the U2 small nuclear ribonucleoproteins complex (U2 snRNP). Within the SF3B subcomplex, interacts directly with SF3B1 (via HEAT domain), SF3B5 and PHF5A. Identified in the spliceosome A complex; remains associated with the spliceosome throughout the splicing process. Component of the spliceosome B complex. Identified in the spliceosome C complex. Identified in the spliceosome E complex. Component of the minor (U12-type spliceosome) spliceosome. Within this complex, interacts with SCNM1. Associates with the STAGA transcription coactivator-HAT complex. Interacts with SUPT3H. Interacts with TAF3.

Its subcellular location is the nucleus. Component of the 17S U2 SnRNP complex of the spliceosome, a large ribonucleoprotein complex that removes introns from transcribed pre-mRNAs. The 17S U2 SnRNP complex (1) directly participates in early spliceosome assembly and (2) mediates recognition of the intron branch site during pre-mRNA splicing by promoting the selection of the pre-mRNA branch-site adenosine, the nucleophile for the first step of splicing. Within the 17S U2 SnRNP complex, SF3B3 is part of the SF3B subcomplex, which is required for 'A' complex assembly formed by the stable binding of U2 snRNP to the branchpoint sequence in pre-mRNA. Sequence independent binding of SF3A and SF3B subcomplexes upstream of the branch site is essential, it may anchor U2 snRNP to the pre-mRNA. May also be involved in the assembly of the 'E' complex. Also acts as a component of the minor spliceosome, which is involved in the splicing of U12-type introns in pre-mRNAs. This Mus musculus (Mouse) protein is Splicing factor 3B subunit 3 (Sf3b3).